Reading from the N-terminus, the 358-residue chain is MYISKTIVFGLFVATLLVSCNADANTTQPLFPAILIFGDSTADTGNNNYYSQAVFKANHLPYGVDLPGHEANGRFSNGKLISDVISTKLNIKEFVPPFLQPNISDQDIVTGVCFASAGAGYDDETSLSSKAIPVSQQPSMFKNYIARLKGIVGDKKAMEIINNALVVISAGPNDFILNFYDIPIRRLEYPTIYGYQDFVLKRLDGFVRELYSLGCRNILVGGLPPMGCLPIQLTAKLRTILGICVEQENKDSILYNQKLVKKLPEIQASLPGSKFLYANVYDPVMDMIRNPSKYGFKETKKGCCGTGYLETSFLCTSLSKTCPNHSDHLFWDSIHPSEAAYKYLGNFIDAQIQEWLKT.

The first 22 residues, 1–22 (MYISKTIVFGLFVATLLVSCNA), serve as a signal peptide directing secretion. A glycan (N-linked (GlcNAc...) asparagine) is linked at Asn-25. The active-site Nucleophile is Ser-40. N-linked (GlcNAc...) asparagine glycans are attached at residues Asn-102 and Asn-324. Residues Asp-332 and His-335 contribute to the active site.

The protein belongs to the 'GDSL' lipolytic enzyme family.

It localises to the secreted. In Arabidopsis thaliana (Mouse-ear cress), this protein is GDSL esterase/lipase At2g30220.